Consider the following 449-residue polypeptide: Zinc finger and BTB domain-containing protein 14 (449 aa).

In terms of domain architecture, BTB spans 36 to 102 (CDIAIVVEDV…MYTAKISVKK (67 aa)). Residue lysine 46 forms a Glycyl lysine isopeptide (Lys-Gly) (interchain with G-Cter in SUMO2) linkage. The Nuclear localization signal signature appears at 50–66 (HRCVLAACSTYFKKLFK). The interval 156-194 (ADAQDDDVEEIGDQDDSPSDDTVEGTPPSQEDGKSPTTT) is disordered. Positions 157–178 (DAQDDDVEEIGDQDDSPSDDTV) are enriched in acidic residues. Residues lysine 203 and lysine 249 each participate in a glycyl lysine isopeptide (Lys-Gly) (interchain with G-Cter in SUMO2) cross-link. 5 C2H2-type zinc fingers span residues 277–304 (IACQ…ADRP), 305–332 (FVCE…GYKP), 333–360 (YSCE…NERP), 361–388 (FACH…GEKP), and 389–417 (FVCG…ERKQ). Residues 405-417 (KRHENNMHSERKQ) are compositionally biased toward basic and acidic residues. The interval 405–424 (KRHENNMHSERKQVTPSAIQ) is disordered.

This sequence belongs to the krueppel C2H2-type zinc-finger protein family. Interacts with ZBTB21. Ubiquitous.

The protein resides in the nucleus. Its function is as follows. Transcriptional activator of the dopamine transporter (DAT), binding it's promoter at the consensus sequence 5'-CCTGCACAGTTCACGGA-3'. Binds to 5'-d(GCC)(n)-3' trinucleotide repeats in promoter regions and acts as a repressor of the FMR1 gene. Transcriptional repressor of MYC and thymidine kinase promoters. This Mus musculus (Mouse) protein is Zinc finger and BTB domain-containing protein 14 (Zbtb14).